We begin with the raw amino-acid sequence, 102 residues long: Citrate lyase acyl carrier protein (102 aa).

Residue serine 14 is modified to O-(phosphoribosyl dephospho-coenzyme A)serine.

The protein belongs to the CitD family. Oligomer with a subunit composition of (alpha,beta,gamma)6.

The protein resides in the cytoplasm. Its function is as follows. Covalent carrier of the coenzyme of citrate lyase. This is Citrate lyase acyl carrier protein from Streptococcus pyogenes serotype M18 (strain MGAS8232).